The following is a 278-amino-acid chain: HAUS augmin-like complex subunit 1 (278 aa).

3 coiled-coil regions span residues 49 to 79, 124 to 177, and 249 to 277; these read RDVYLVIEDLKQKASEYESEAKYLQDLLMES, SDLF…KVDN, and SLAQVKIEEAKRELDSIEAELTRRVDMME.

The protein belongs to the HAUS1 family. As to quaternary structure, component of the HAUS augmin-like complex. The complex interacts with the gamma-tubulin ring complex and this interaction is required for spindle assembly. Associates with microtubules. The interaction with microtubules is strong during mitosis, while it is weak or absent during interphase. It is unclear whether this interaction is direct or indirect. Interacts with EML3 (phosphorylated at 'Thr-881'). Widely expressed. Expressed in pancreas, kidney, skeletal muscle, liver and heart. Weakly expressed in lung, brain and placenta.

Its subcellular location is the cytoplasm. The protein localises to the cytoskeleton. It is found in the microtubule organizing center. The protein resides in the centrosome. It localises to the spindle. Its subcellular location is the spindle pole. Functionally, contributes to mitotic spindle assembly, maintenance of centrosome integrity and completion of cytokinesis as part of the HAUS augmin-like complex. The sequence is that of HAUS augmin-like complex subunit 1 (HAUS1) from Homo sapiens (Human).